Reading from the N-terminus, the 192-residue chain is SPbeta prophage-derived uncharacterized protein YokK (192 aa).

This chain is SPbeta prophage-derived uncharacterized protein YokK (yokK), found in Bacillus subtilis (strain 168).